Consider the following 393-residue polypeptide: Protein TsgA (393 aa).

A run of 12 helical transmembrane segments spans residues 11 to 31, 51 to 71, 78 to 98, 101 to 121, 134 to 154, 162 to 182, 206 to 226, 245 to 265, 273 to 293, 297 to 317, 332 to 352, and 361 to 381; these read WISF…GMVM, FLNA…EIVP, FGFL…SLAL, AAMF…TFLI, LLFT…IAAF, WYWV…LTFG, IGVL…LGFI, TLVS…SFIL, ILTV…TGTP, AWSI…IITL, FVLT…GPIV, and LLTA…LGFV.

Belongs to the major facilitator superfamily. TsgA family.

Its subcellular location is the cell inner membrane. The protein is Protein TsgA of Shigella dysenteriae serotype 1 (strain Sd197).